Reading from the N-terminus, the 796-residue chain is Kinesin-like protein KIF3C (796 aa).

The Kinesin motor domain occupies 10 to 367 (ALKVVARCRP…LRFANRAKNI (358 aa)). An ATP-binding site is contributed by 97–104 (GQTGTGKT). Disordered stretches follow at residues 252–292 (RQNK…PKEA), 397–422 (EKKG…APAG), and 758–796 (KVRK…VDHD). Low complexity predominate over residues 256 to 269 (AGPNAAGGPATQPT). Residues 378 to 632 (KDTLLREFQE…NEQTRELKLK (255 aa)) adopt a coiled-coil conformation. Residues 401–416 (MLGKRPRRKSSRRKKA) are compositionally biased toward basic residues. Residues 633-793 (YLIIENFIPP…SVPLHPATVV (161 aa)) form a globular region.

The protein belongs to the TRAFAC class myosin-kinesin ATPase superfamily. Kinesin family. Kinesin II subfamily. Heterodimer of KIF3A and KIF3C.

It localises to the cytoplasm. It is found in the cytoskeleton. Its function is as follows. Microtubule-based anterograde translocator for membranous organelles. The protein is Kinesin-like protein KIF3C (Kif3c) of Mus musculus (Mouse).